The following is a 117-amino-acid chain: Large ribosomal subunit protein bL20 (117 aa).

It belongs to the bacterial ribosomal protein bL20 family.

Functionally, binds directly to 23S ribosomal RNA and is necessary for the in vitro assembly process of the 50S ribosomal subunit. It is not involved in the protein synthesizing functions of that subunit. The polypeptide is Large ribosomal subunit protein bL20 (Rickettsia akari (strain Hartford)).